Here is a 136-residue protein sequence, read N- to C-terminus: Protein NrdI (136 aa).

This sequence belongs to the NrdI family.

In terms of biological role, probably involved in ribonucleotide reductase function. The polypeptide is Protein NrdI (Escherichia coli O1:K1 / APEC).